Here is a 339-residue protein sequence, read N- to C-terminus: Dihydroorotate dehydrogenase (quinone) (339 aa).

FMN-binding positions include Ala62–Lys66 and Thr86. Lys66 contacts substrate. Asn111–Phe115 provides a ligand contact to substrate. Positions 139 and 172 each coordinate FMN. Substrate is bound at residue Asn172. Catalysis depends on Ser175, which acts as the Nucleophile. Asn177 provides a ligand contact to substrate. Residues Lys217 and Thr245 each contribute to the FMN site. Asn246–Thr247 is a substrate binding site. Residues Gly268, Gly297, and Tyr318–Ser319 contribute to the FMN site.

This sequence belongs to the dihydroorotate dehydrogenase family. Type 2 subfamily. As to quaternary structure, monomer. FMN serves as cofactor.

The protein resides in the cell membrane. The catalysed reaction is (S)-dihydroorotate + a quinone = orotate + a quinol. It functions in the pathway pyrimidine metabolism; UMP biosynthesis via de novo pathway; orotate from (S)-dihydroorotate (quinone route): step 1/1. Its function is as follows. Catalyzes the conversion of dihydroorotate to orotate with quinone as electron acceptor. This Shewanella sediminis (strain HAW-EB3) protein is Dihydroorotate dehydrogenase (quinone).